Here is a 142-residue protein sequence, read N- to C-terminus: Conidial pigment biosynthesis dehydratase EthD (142 aa).

The EthD domain occupies 25 to 121 (PGMSEAAYRE…PDHQKFADTS (97 aa)).

This sequence belongs to the tpcK family.

It functions in the pathway pigment biosynthesis. Functionally, dehydratase; part of the Pks1 gene cluster that mediates the biosynthesis of an anthraquinone derivative pigment that contributes to conidial pigmentation that provides protection from UV radiation, heat and cold stress. The polyketide synthase Pks1 produces 1-acetyl-2,4,6,8-tetrahydroxy-9,10-anthraquinone though condensation of acetyl-CoA with malonyl-CoA. The dehydratase EthD and the laccase Mlac1 further convert the anthraquinone derivative into the final conidial pigment. The chain is Conidial pigment biosynthesis dehydratase EthD from Metarhizium robertsii (strain ARSEF 23 / ATCC MYA-3075) (Metarhizium anisopliae (strain ARSEF 23)).